We begin with the raw amino-acid sequence, 210 residues long: Glutathione S-transferase P (210 aa).

A GST N-terminal domain is found at 2–81 (PPYTVVYFPV…HLGRTLGLYG (80 aa)). Residue Tyr-4 is modified to Phosphotyrosine; by EGFR. Glutathione contacts are provided by residues Tyr-8, Arg-14, Trp-39, Lys-45, and 52 to 53 (QL). Thr-62 is subject to Phosphothreonine. 65 to 66 (QS) provides a ligand contact to glutathione. Positions 83 to 204 (DQREAALVDM…ASPEHVNLPI (122 aa)) constitute a GST C-terminal domain. Lys-103 and Lys-116 each carry N6-succinyllysine. N6-acetyllysine is present on Lys-128.

It belongs to the GST superfamily. Pi family. In terms of assembly, homodimer. Interacts with CDK5.

The protein localises to the cytoplasm. It localises to the mitochondrion. The protein resides in the nucleus. The catalysed reaction is RX + glutathione = an S-substituted glutathione + a halide anion + H(+). The enzyme catalyses prostaglandin J2 + glutathione = prostaglandin J2-S-(R)-glutathione. It carries out the reaction prostaglandin J2 + glutathione = prostaglandin J2-S-(S)-glutathione. It catalyses the reaction prostaglandin A2 + glutathione = prostaglandin A2-S-(S)-glutathione. The catalysed reaction is 11(S)-hydroxy-14(S),15(S)-epoxy-(5Z,8Z,12E)-eicosatrienoate + glutathione = (11S,15S)-dihydroxy-14(R)-S-glutathionyl-(5Z,8Z,12E)-eicosatrienoate. Its function is as follows. Conjugation of reduced glutathione to a wide number of exogenous and endogenous hydrophobic electrophiles. Involved in the formation of glutathione conjugates of both prostaglandin A2 (PGA2) and prostaglandin J2 (PGJ2). Participates in the formation of novel hepoxilin regioisomers. Negatively regulates CDK5 activity via p25/p35 translocation to prevent neurodegeneration. The chain is Glutathione S-transferase P (GSTP1) from Macaca mulatta (Rhesus macaque).